We begin with the raw amino-acid sequence, 991 residues long: MMVDNEEINSLSIENILERINKSSNINEAKSLCLFASSLFDNNQYLLIQRYLISIKERDFDISIQLFWRLFNNNSFKEYIVLVVLKFLEKEIEDLEYYDFIKKNYRDQFQKIFIDSDDNSTNNSSSSSNENKKNKRSYLKLNTILNKLTKSLNHLSFYISEIDNLNKFFNPITFLLNNNNNNNNNNNNNNNNNNNKNNSNNNNKNNNNNNDDSNNNNNNNFLKILELIQKSCQYLNENENYEYSILLYLLIKGKFENKIRTFIKSSKKEDQDIKSKIKRFWFNGIQSLNQYKNKYSSKIEIEPPLPMKSYFDEDDYDQKQQQQQQQQQQQQEQKGSKEDEEDIEKQKKSLTSEIELFLLPINRFCLPIIFHIENEEFEQLDIKGNSGSGSDSSSSISKLEIVDQCWKYYICKGDDITDESILEIQKFLQQFADSGKHLKRHQNNSILNFTINLLSNPEKARNDYFDRNSEGNGGDENDENSQESNDSYEFEIHLGIYLLSSLLYISSWRYFKFLVTGSSNIEKQNIQTIGTLKKNQILLFDANFNSNSNSSSGSNGIINNNSNSNQQSYHNNNNNNNNNNNNNNNNNNNNNNNNNNNNNNNNNNNNNNNQGQQPNLSMITHQVLYYSNVDDESSFDDEFPKIVFTKQQTEAIKHLTLCMECFNDLNQEPWINDFKRILSTTWNNSKFYWLYNSLADSHYYYKLDGANTLIPIGDSKKRLFNPNDELWFNRLLLNIGMTNHSEIEDSIICLLEILISISIPPPPSSSSSSFSSSNSSLNNDLFNQQLVPSKHTFKTIKPYLTVFSEEEILFWCIDTLATCYERLGMVGEITVLYQAYWNYYKSRFYQIINEIKGTPNQNPNLIPLSNLVKKDLQIGYFFPRFFDYIINIEMLEEFCFILNKGFKLDILQRNQTVSSNREMIDIIKRHITITTSNNNLTIPILLKQFFNEELDHFLIKKENREKQYSSSNTANNSGVNNSPIHNQNTDVEMNE.

Disordered regions lie at residues asparagine 180–asparagine 217, tyrosine 310–lysine 345, asparagine 462–serine 484, asparagine 549–proline 614, and glutamate 961–glutamate 991. Residues lysine 319–glutamine 333 are compositionally biased toward low complexity. Positions glycine 473–serine 484 are enriched in acidic residues. Over residues asparagine 549 to asparagine 609 the composition is skewed to low complexity. The segment covering tyrosine 964 to glutamate 991 has biased composition (polar residues).

The protein resides in the nucleus. Functionally, may be a component of the Integrator complex, a complex involved in the small nuclear RNAs (snRNA) U1 and U2 transcription and in their 3'-box-dependent processing. The protein is Integrator complex subunit 10-like protein of Dictyostelium discoideum (Social amoeba).